Reading from the N-terminus, the 339-residue chain is Malate/(S)-sulfolactate dehydrogenase (339 aa).

The protein belongs to the LDH2/MDH2 oxidoreductase family. As to quaternary structure, homodimer.

The protein resides in the cytoplasm. The enzyme catalyses (S)-malate + NAD(+) = oxaloacetate + NADH + H(+). It catalyses the reaction (S)-malate + NADP(+) = oxaloacetate + NADPH + H(+). The catalysed reaction is (2S)-3-sulfolactate + NAD(+) = 3-sulfopyruvate + NADH + H(+). Its function is as follows. Acts on oxaloacetate, sulfopyruvate but not on pyruvate. Has a higher selectivity for the coenzyme NADH than for NADPH. This chain is Malate/(S)-sulfolactate dehydrogenase (mdh), found in Methanothermus fervidus (strain ATCC 43054 / DSM 2088 / JCM 10308 / V24 S).